We begin with the raw amino-acid sequence, 386 residues long: Adiponectin receptor protein 2 (386 aa).

A disordered region spans residues 1–72 (MNEPAKHRLG…ECHDDNSQED (72 aa)). Over 1 to 147 (MNEPAKHRLG…SIFRIHTETG (147 aa)) the chain is Cytoplasmic. The segment covering 15-31 (PEPDIRLRKGHQLDDTR) has biased composition (basic and acidic residues). Residues 58–72 (SPEEPECHDDNSQED) are compositionally biased toward acidic residues. The chain crosses the membrane as a helical span at residues 148 to 168 (NIWTHLLGCVFFLCLGIFYMF). Residues 169 to 181 (RPNISFVAPLQEK) lie on the Extracellular side of the membrane. A helical transmembrane segment spans residues 182 to 202 (VVFGLFFLGAILCLSFSWLFH). Histidine 202 is a Zn(2+) binding site. Residues 203-213 (TVYCHSEGVSR) are Cytoplasmic-facing. A helical membrane pass occupies residues 214-234 (LFSKLDYSGIALLIMGSFVPW). Over 235–245 (LYYSFYCNPQP) the chain is Extracellular. A helical membrane pass occupies residues 246–266 (CFIYLIVICVLGIAAIIVSQW). Residues 267-273 (DMFATPQ) are Cytoplasmic-facing. Residues 274–294 (YRGVRAGVFVGLGLSGIIPTL) traverse the membrane as a helical segment. Residues 295-309 (HYVISEGFLKAATIG) lie on the Extracellular side of the membrane. The chain crosses the membrane as a helical span at residues 310–330 (QIGWLMLMASLYITGAALYAA). Residues 331-348 (RIPERFFPGKCDIWFHSH) lie on the Cytoplasmic side of the membrane. Residues histidine 348 and histidine 352 each contribute to the Zn(2+) site. The chain crosses the membrane as a helical span at residues 349–369 (QLFHIFVVAGAFVHFHGVSNL). Over 370–386 (QEFRFMIGGGCTEEDAL) the chain is Extracellular.

Belongs to the ADIPOR family. May form homooligomers and heterooligomers with ADIPOR1. Interacts with APPL2 (via BAR domain); ADIPOQ dissociates this interaction. As to expression, detected in liver and quadriceps muscle (at protein level). Highly expressed in liver. Highly expressed in white adipose tissue, and at intermediate levels in brown adipose tissue. Expressed at intermediate level in heart, kidney, lung and skeletal muscle. Weakly expressed in brain, spleen and testis.

The protein localises to the cell membrane. Its function is as follows. Receptor for ADIPOQ, an essential hormone secreted by adipocytes that regulates glucose and lipid metabolism. Required for normal body fat and glucose homeostasis. ADIPOQ-binding activates a signaling cascade that leads to increased PPARA activity, and ultimately to increased fatty acid oxidation and glucose uptake. Has intermediate affinity for globular and full-length adiponectin. Required for normal revascularization after chronic ischemia caused by severing of blood vessels. This is Adiponectin receptor protein 2 from Mus musculus (Mouse).